We begin with the raw amino-acid sequence, 346 residues long: 2,5-dichlorohydroquinone reductive dechlorinase (346 aa).

Positions 43-154 (PRFELFHFVF…YLCDALSGGT (112 aa)) constitute a GST N-terminal domain. Positions 189 to 335 (DRRPESMQAV…AIIQWPGHPP (147 aa)) constitute a GST C-terminal domain.

It belongs to the GST superfamily.

It catalyses the reaction 2,5-dichlorohydroquinone + 2 glutathione = chlorohydroquinone + glutathione disulfide + chloride + H(+). The catalysed reaction is chlorohydroquinone + 2 glutathione = hydroquinone + glutathione disulfide + chloride + H(+). It participates in xenobiotic degradation; gamma-hexachlorocyclohexane degradation. Catalyzes the degradation of 2,5-dichlorohydroquinone (2,5-DCHQ) into hydroquinone (HQ) via chlorohydroquinone (CHQ). This chain is 2,5-dichlorohydroquinone reductive dechlorinase, found in Sphingobium indicum (strain DSM 16412 / CCM 7286 / MTCC 6364 / B90A).